Reading from the N-terminus, the 535-residue chain is EGF domain-specific O-linked N-acetylglucosamine transferase (535 aa).

The signal sequence occupies residues 1–16 (MFILLMFVLLLQEILA). N-linked (GlcNAc...) asparagine glycans are attached at residues asparagine 22 and asparagine 271. The Required for optimal activity motif lies at 303-305 (DYD). N-linked (GlcNAc...) asparagine glycans are attached at residues asparagine 362 and asparagine 501.

This sequence belongs to the glycosyltransferase 61 family.

It localises to the endoplasmic reticulum lumen. The catalysed reaction is L-seryl-[protein] + UDP-N-acetyl-alpha-D-glucosamine = 3-O-(N-acetyl-beta-D-glucosaminyl)-L-seryl-[protein] + UDP + H(+). It catalyses the reaction L-threonyl-[protein] + UDP-N-acetyl-alpha-D-glucosamine = 3-O-(N-acetyl-beta-D-glucosaminyl)-L-threonyl-[protein] + UDP + H(+). Functionally, catalyzes the transfer of a single N-acetylglucosamine from UDP-GlcNAc to a serine or threonine residue in extracellular proteins resulting in their modification with a beta-linked N-acetylglucosamine (O-GlcNAc). Specifically glycosylates the Thr residue located between the fifth and sixth conserved cysteines of folded EGF-like domains. In Gallus gallus (Chicken), this protein is EGF domain-specific O-linked N-acetylglucosamine transferase (EOGT).